Here is a 241-residue protein sequence, read N- to C-terminus: Megakaryocyte and platelet inhibitory receptor G6b (241 aa).

The first 17 residues, 1 to 17 (MAVFLQLLPLLLSRAQG), serve as a signal peptide directing secretion. The Extracellular portion of the chain corresponds to 18-142 (NPGASLDGRP…GPTHGSVYPQ (125 aa)). A glycan (N-linked (GlcNAc...) asparagine) is linked at Asn-32. Residues 143-163 (LLIPLLGAGLVLGLGALGLVW) traverse the membrane as a helical segment. Over 164-241 (WLHRRLPPQP…DASTIYAVVV (78 aa)) the chain is Cytoplasmic. 2 short sequence motifs (ITIM motif) span residues 209-214 (LLYADL) and 235-240 (TIYAVV). Residue Tyr-211 is modified to Phosphotyrosine.

As to quaternary structure, interacts (via ITIM motif) with PTPN6 and PTPN11. Binds to heparin. In terms of processing, all isoforms are N-glycosylated. Isoform E is O-glycosylated. Post-translationally, phosphorylated. In terms of tissue distribution, expressed in platelets. Expressed in a restricted set of hematopoietic cell lines including the erythroleukemia cell line K-562 and the T-cell leukemia cell lines MOLT-4 and Jurkat. Not detected in the monocyte-like cell line U-937, the B-cell-like cell line Raji, the fibroblast cell lines TK and HeLa, or the natural killer cell lines NKL, NK 62 and YT.

It is found in the endoplasmic reticulum. Its subcellular location is the golgi apparatus. The protein resides in the cell membrane. Functionally, inhibitory receptor that acts as a critical regulator of hematopoietic lineage differentiation, megakaryocyte function and platelet production. Inhibits platelet aggregation and activation by agonists such as ADP and collagen-related peptide. This regulation of megakaryocate function as well as platelet production ann activation is done through the inhibition (via the 2 ITIM motifs) of the receptors CLEC1B and GP6:FcRgamma signaling. Appears to operate in a calcium-independent manner. In terms of biological role, isoform B, displayed in this entry, is the only isoform to contain both a transmembrane region and 2 immunoreceptor tyrosine-based inhibitor motifs (ITIMs) and, thus, the only one which probably has a role of inhibitory receptor. Isoform A may be the activating counterpart of isoform B. In Homo sapiens (Human), this protein is Megakaryocyte and platelet inhibitory receptor G6b.